Consider the following 258-residue polypeptide: Type III pantothenate kinase (258 aa).

6 to 13 (DIGNTNTV) is an ATP binding site. Residues Tyr100 and 107–110 (GADR) contribute to the substrate site. Asp109 functions as the Proton acceptor in the catalytic mechanism. Asp129 provides a ligand contact to K(+). Thr132 provides a ligand contact to ATP. A substrate-binding site is contributed by Thr185.

It belongs to the type III pantothenate kinase family. As to quaternary structure, homodimer. Requires NH4(+) as cofactor. It depends on K(+) as a cofactor.

The protein resides in the cytoplasm. It catalyses the reaction (R)-pantothenate + ATP = (R)-4'-phosphopantothenate + ADP + H(+). It functions in the pathway cofactor biosynthesis; coenzyme A biosynthesis; CoA from (R)-pantothenate: step 1/5. Its function is as follows. Catalyzes the phosphorylation of pantothenate (Pan), the first step in CoA biosynthesis. In Syntrophobacter fumaroxidans (strain DSM 10017 / MPOB), this protein is Type III pantothenate kinase.